Here is a 521-residue protein sequence, read N- to C-terminus: HTH-type transcriptional regulatory protein TyrR (521 aa).

The 71-residue stretch at 2-72 (RLEVFCQDRI…GVTDVRTVPY (71 aa)) folds into the ACT domain. One can recognise a PAS domain in the interval 78–120 (EHRVLSALLVAMPEPVFSVDLRTKVELANPAAQNLFNLDENKI). Residues 207–436 (IVAVTPRMRQ…LKNALYRALT (230 aa)) enclose the Sigma-54 factor interaction domain. ATP contacts are provided by residues 235-242 (GDTGTGKD) and 298-307 (ANGGSVLLDE). A DNA-binding region (H-T-H motif) is located at residues 489 to 509 (STRKLAKRLGVSHTAIANKLR).

Homodimer. In presence of tyrosine (or high concentrations of phenylalanine or tryptophan) and ATP, it self-associates to form an hexamer.

The protein localises to the cytoplasm. Dual transcriptional regulator of the TyrR regulon, which includes a number of genes coding for proteins involved in the biosynthesis or transport of the three aromatic amino acids, phenylalanine, tyrosine and tryptophan. These three aromatic amino acids act as effectors which bind to the TyrR protein to form an active regulatory protein. Acts by binding specifically to TyrR boxes in the promoter region of the target genes. This Enterobacter agglomerans (Erwinia herbicola) protein is HTH-type transcriptional regulatory protein TyrR.